The chain runs to 304 residues: PTB domain-containing engulfment adapter protein 1 (304 aa).

T16 bears the Phosphothreonine mark. The 156-residue stretch at 21–176 (SKHFIPYNAK…AGLQKRIQDL (156 aa)) folds into the PID domain. A coiled-coil region spans residues 158-202 (KDVETRKQIAGLQKRIQDLETENMELKNKVQDLENQLRITQVSAP). At S223 the chain carries Phosphoserine. Residues 223–246 (SPISHQSSMPTRNGTQPPPVPSRS) are disordered. Over residues 225-237 (ISHQSSMPTRNGT) the composition is skewed to polar residues.

Belongs to the ced-6 family. As to quaternary structure, homodimer. Interacts with clathrin. Interacts with GDP-bound ARF6, but not with GTP-bound ARF6. Part of a complex composed of GULP1, ACAP1 and ARF6. Interacts with ACAP1, LRP1, MEGF10 and STAB2. Widely expressed. Detected in macrophages, pancreas, kidney, skeletal muscle, heart, colon, intestine, lung, placenta and ovary.

The protein localises to the cytoplasm. Its function is as follows. May function as an adapter protein. Required for efficient phagocytosis of apoptotic cells. Modulates cellular glycosphingolipid and cholesterol transport. May play a role in the internalization and endosomal trafficking of various LRP1 ligands, such as PSAP. Increases cellular levels of GTP-bound ARF6. The protein is PTB domain-containing engulfment adapter protein 1 (GULP1) of Homo sapiens (Human).